The following is a 754-amino-acid chain: Polyadenylate-binding protein, cytoplasmic and nuclear (754 aa).

Polar residues predominate over residues M1 to A25. Residues M1 to S52 form a disordered region. Over residues S36 to N46 the composition is skewed to low complexity. 4 RRM domains span residues A51–R129, G139–S216, T232–K309, and V335–R465. 2 disordered regions span residues K365–D420 and R595–P648. Residues V366–D420 are compositionally biased toward basic and acidic residues. A compositionally biased stretch (gly residues) spans G610 to G633. Over residues Q634–P648 the composition is skewed to low complexity. The region spanning A649–K726 is the PABC domain. A disordered region spans residues G729–S754.

This sequence belongs to the polyadenylate-binding protein type-1 family.

The protein localises to the cytoplasm. It is found in the nucleus. In terms of biological role, binds the poly(A) tail of mRNA. Appears to be an important mediator of the multiple roles of the poly(A) tail in mRNA biogenesis, stability and translation. In the nucleus, involved in both mRNA cleavage and polyadenylation. Is also required for efficient mRNA export to the cytoplasm. Acts in concert with a poly(A)-specific nuclease (PAN) to affect poly(A) tail shortening, which may occur concomitantly with either nucleocytoplasmic mRNA transport or translational initiation. In the cytoplasm, stimulates translation initiation and regulates mRNA decay through translation termination-coupled poly(A) shortening, probably mediated by PAN. The polypeptide is Polyadenylate-binding protein, cytoplasmic and nuclear (pab1) (Aspergillus clavatus (strain ATCC 1007 / CBS 513.65 / DSM 816 / NCTC 3887 / NRRL 1 / QM 1276 / 107)).